A 106-amino-acid polypeptide reads, in one-letter code: Protein Rev (106 aa).

Positions 8-16 (VIKFLYQSN) are homomultimerization. A disordered region spans residues 13 to 36 (YQSNPPPRPEGTRQARRNRRRRWR). Positions 24 to 40 (TRQARRNRRRRWRARQR) match the Nuclear localization signal and RNA-binding (RRE) motif. Residues 26-36 (QARRNRRRRWR) show a composition bias toward basic residues. The Nuclear export signal and binding to XPO1 motif lies at 63-74 (LQLPPLERLTLD). Ser82 and Ser89 each carry phosphoserine; by host.

It belongs to the HIV-1 REV protein family. Homomultimer; when bound to the RRE. Multimeric assembly is essential for activity and may involve XPO1. Binds to human KPNB1, XPO1, TNPO1, RANBP5 and IPO7. Interacts with the viral Integrase. Interacts with human KHDRBS1. Interacts with human NAP1; this interaction decreases Rev multimerization and stimulates its activity. Interacts with human DEAD-box helicases DDX3 and DDX24; these interactions may serve for viral RNA export to the cytoplasm and packaging, respectively. Interacts with human PSIP1; this interaction may inhibit HIV-1 DNA integration by promoting dissociation of the Integrase-LEDGF/p75 complex. Post-translationally, asymmetrically arginine dimethylated at one site by host PRMT6. Methylation impairs the RNA-binding activity and export of viral RNA from the nucleus to the cytoplasm. Phosphorylated by protein kinase CK2. Presence of, and maybe binding to the N-terminus of the regulatory beta subunit of CK2 is necessary for CK2-mediated Rev's phosphorylation.

The protein localises to the host nucleus. Its subcellular location is the host nucleolus. It localises to the host cytoplasm. Its function is as follows. Escorts unspliced or incompletely spliced viral pre-mRNAs (late transcripts) out of the nucleus of infected cells. These pre-mRNAs carry a recognition sequence called Rev responsive element (RRE) located in the env gene, that is not present in fully spliced viral mRNAs (early transcripts). This function is essential since most viral proteins are translated from unspliced or partially spliced pre-mRNAs which cannot exit the nucleus by the pathway used by fully processed cellular mRNAs. Rev itself is translated from a fully spliced mRNA that readily exits the nucleus. Rev's nuclear localization signal (NLS) binds directly to KPNB1/Importin beta-1 without previous binding to KPNA1/Importin alpha-1. KPNB1 binds to the GDP bound form of RAN (Ran-GDP) and targets Rev to the nucleus. In the nucleus, the conversion from Ran-GDP to Ran-GTP dissociates Rev from KPNB1 and allows Rev's binding to the RRE in viral pre-mRNAs. Rev multimerization on the RRE via cooperative assembly exposes its nuclear export signal (NES) to the surface. Rev can then form a complex with XPO1/CRM1 and Ran-GTP, leading to nuclear export of the complex. Conversion from Ran-GTP to Ran-GDP mediates dissociation of the Rev/RRE/XPO1/RAN complex, so that Rev can return to the nucleus for a subsequent round of export. Beside KPNB1, also seems to interact with TNPO1/Transportin-1, RANBP5/IPO5 and IPO7/RANBP7 for nuclear import. The nucleoporin-like HRB/RIP is an essential cofactor that probably indirectly interacts with Rev to release HIV RNAs from the perinuclear region to the cytoplasm. This chain is Protein Rev, found in Homo sapiens (Human).